Here is a 111-residue protein sequence, read N- to C-terminus: Inner membrane protein YdgC (111 aa).

At 1–26 (MGLVIKAALGALVVLLIGVLAKTKNY) the chain is on the cytoplasmic side. A helical membrane pass occupies residues 27–47 (YIAGLIPLFPTFALIAHYIVA). Over 48–58 (SERGIEALRAT) the chain is Periplasmic. The chain crosses the membrane as a helical span at residues 59 to 79 (IIFSMWSIIPYFVYLVSLWYF). Topologically, residues 80–87 (TGMMRLPA) are cytoplasmic. The helical transmembrane segment at 88–108 (AFVGSVACWGISAWVLIICWI) threads the bilayer. The Periplasmic segment spans residues 109 to 111 (KLH).

It to P.aeruginosa GlpM.

The protein localises to the cell inner membrane. The sequence is that of Inner membrane protein YdgC (ydgC) from Escherichia coli O157:H7.